The chain runs to 109 residues: Red pigment-concentrating prohormone (109 aa).

The first 25 residues, 1–25, serve as a signal peptide directing secretion; that stretch reads MVRRSGVTLLVVALLVVTLMSSVSA. Gln-26 carries the post-translational modification Pyrrolidone carboxylic acid. Trp-33 carries the tryptophan amide modification. The tract at residues 34–78 is disordered; it reads GKRAAGASGSNGGVGEAVSGLHPSVGGAPGGVVPPGSSSPGDSCG. Low complexity-rich tracts occupy residues 49 to 59 and 67 to 78; these read EAVSGLHPSVG and PPGSSSPGDSCG.

The protein belongs to the AKH/HRTH/RPCH family.

The protein localises to the secreted. This hormone adapts the animal to light backgrounds by stimulating concentration of the pigment of its red body-chromatophores. The sequence is that of Red pigment-concentrating prohormone from Callinectes sapidus (Blue crab).